A 386-amino-acid polypeptide reads, in one-letter code: Histidine decarboxylase (386 aa).

Histidine 120 is a binding site for substrate. An N6-(pyridoxal phosphate)lysine modification is found at lysine 233.

Belongs to the group II decarboxylase family. As to quaternary structure, homotetramer. Pyridoxal 5'-phosphate serves as cofactor.

The catalysed reaction is L-histidine + H(+) = histamine + CO2. Its pathway is siderophore biosynthesis; anguibactin biosynthesis. The chain is Histidine decarboxylase from Vibrio anguillarum (strain ATCC 68554 / 775) (Listonella anguillarum).